The sequence spans 962 residues: Protein suppressor of underreplication (962 aa).

Disordered stretches follow at residues 353–413 (EIVT…TRAA), 438–590 (TPTP…LSGS), 658–712 (NSSH…SPDL), 866–900 (QERT…TQAT), and 916–962 (QTSS…ELFK). A compositionally biased stretch (basic residues) spans 372–382 (PRTKSKKKCSK). The span at 386-395 (PCKEADLTDS) shows a compositional bias: basic and acidic residues. 2 stretches are compositionally biased toward polar residues: residues 438–448 (TPTPSGATTAI) and 480–489 (LTRSAESKIN). Basic and acidic residues predominate over residues 524-552 (VKQESKAKAKPEQKKKIKTVDKPAQETPK). A compositionally biased stretch (basic residues) spans 553–562 (RKPGRPRKCK). The span at 564 to 576 (LTETLGKSKTKPN) shows a compositional bias: polar residues. Residues 673-683 (RRTKALKRKRK) are compositionally biased toward basic residues. 2 stretches are compositionally biased toward polar residues: residues 703-712 (RSATNKSPDL) and 866-880 (QERT…NSIV). Residues 885–894 (KSPKSPKHGA) show a composition bias toward basic residues. Residues 916–944 (QTSSVESVSAPSTPVNPSTSAAACQTRTA) show a composition bias toward polar residues. The segment covering 953 to 962 (TKRKRLELFK) has biased composition (basic residues).

The protein localises to the nucleus. The protein resides in the chromosome. Its function is as follows. Required for underreplication of DNA, which is found in many late replicating euchromatic regions of salivary gland polytene chromosomes. Controls chromatin organization in polytene chromosomes. The protein is Protein suppressor of underreplication (SuUR) of Drosophila erecta (Fruit fly).